A 371-amino-acid polypeptide reads, in one-letter code: Glycerol-3-phosphate dehydrogenase [NAD(+)] 2 (371 aa).

NAD(+) contacts are provided by residues Gly18–Gly23, Phe50, and Phe106. Lys129 contributes to the substrate binding site. Ala162 contributes to the NAD(+) binding site. Lys222 serves as the catalytic Proton acceptor. Residues Arg294 and Gln323 each contribute to the NAD(+) site. Residue Arg294–Asn295 coordinates substrate.

Belongs to the NAD-dependent glycerol-3-phosphate dehydrogenase family. As to quaternary structure, interacts with human CFH/complement factor H; the interaction is direct and enables the pathogen to evade the host innate immune system. Interacts with human CFHR1/complement factor H-related protein 1; the interaction is direct. Interacts with human PLG/plasminogen; the interaction is direct and provides active plasmin on the surface of fungal cells.

The protein localises to the secreted. It localises to the cell wall. The protein resides in the cytoplasm. Its subcellular location is the peroxisome. It catalyses the reaction sn-glycerol 3-phosphate + NAD(+) = dihydroxyacetone phosphate + NADH + H(+). Its function is as follows. May catalyze the production and accumulation of glycerol during hyperosmotic stress conditions. Glycerol acts as a osmoregulator that prevents loss of water and turgor of the cells. Mediates evasion of the host innate immune system by binding inhibitory components of the host alternative complement system, in a manner dependent on estrogen-induced inhibition of EBP1. The polypeptide is Glycerol-3-phosphate dehydrogenase [NAD(+)] 2 (Candida albicans (strain SC5314 / ATCC MYA-2876) (Yeast)).